The chain runs to 43 residues: MAARAVFLALSAQLLQARLMKEESPVVSWRLEPEDGTALCFIF.

Positions methionine 1 to alanine 17 are cleaved as a signal peptide.

This sequence belongs to the BAGE family. As to expression, not expressed in normal tissues, except in testis. Expressed with significant proportion in melanomas, but also in tumors of various histological origins, such as bladder carcinomas, head and neck squamous cell carcinomas, lung and breast carcinomas. Not expressed in renal, colorectal and prostatic carcinomas, leukemias and lymphomas. More frequently expressed in metastatic melanomas than in primary melanomas.

Its subcellular location is the secreted. Unknown. Antigen recognized on a melanoma by autologous cytolytic T-lymphocytes. This Homo sapiens (Human) protein is B melanoma antigen 1 (BAGE).